The chain runs to 230 residues: MDLKYLNQKEAIAVDQELFNEYKFSVDQLMELAGLSCAHAVAKCFPAEKHPRILVCCGPGNNGGDGLVAARHLALMGYTPTIYYPKPTAKPLFENLSHQCQQMDICDVKECPSVESAARDYDLILDALFGFSFKPPVRADFVAVVELMQQTKLPIASVDIPSGWDVEKGKLTECDVEPALLISLTAPKLCARQFRGEHHYLGGRFVPPALQRKYELNLPVYPGNELCVKL.

Positions Ala-11 to Leu-218 constitute a YjeF N-terminal domain. Residue Asn-61 to Asp-65 participates in (6S)-NADPHX binding. Asn-62 and Asp-126 together coordinate K(+). (6S)-NADPHX-binding positions include Gly-130 to Pro-136 and Asp-159. Ser-162 contributes to the K(+) binding site.

The protein belongs to the NnrE/AIBP family. K(+) serves as cofactor.

The enzyme catalyses (6R)-NADHX = (6S)-NADHX. It catalyses the reaction (6R)-NADPHX = (6S)-NADPHX. Catalyzes the epimerization of the S- and R-forms of NAD(P)HX, a damaged form of NAD(P)H that is a result of enzymatic or heat-dependent hydration. This is a prerequisite for the S-specific NAD(P)H-hydrate dehydratase to allow the repair of both epimers of NAD(P)HX. In Drosophila sechellia (Fruit fly), this protein is NAD(P)H-hydrate epimerase.